A 389-amino-acid polypeptide reads, in one-letter code: Ethanolamine-phosphate cytidylyltransferase (389 aa).

CTP-binding positions include 221-222 (AF), 229-232 (HVDF), Lys-259, 307-310 (HGKT), and 336-340 (SGNDL). Phosphothreonine is present on residues Thr-341 and Thr-342.

It belongs to the cytidylyltransferase family.

It carries out the reaction phosphoethanolamine + CTP + H(+) = CDP-ethanolamine + diphosphate. Its pathway is phospholipid metabolism; phosphatidylethanolamine biosynthesis; phosphatidylethanolamine from ethanolamine: step 2/3. Its function is as follows. Ethanolamine-phosphate cytidylyltransferase that catalyzes the second step in the synthesis of phosphatidylethanolamine (PE) from ethanolamine via the CDP-ethanolamine pathway. Phosphatidylethanolamine is a dominant inner-leaflet phospholipid in cell membranes, where it plays a role in membrane function by structurally stabilizing membrane-anchored proteins, and participates in important cellular processes such as cell division, cell fusion, blood coagulation, and apoptosis. This is Ethanolamine-phosphate cytidylyltransferase (PCYT2) from Bos taurus (Bovine).